The following is a 148-amino-acid chain: Large-conductance mechanosensitive channel (148 aa).

The next 2 helical transmembrane spans lie at 9–29 (AFAVKGNVVDMAVGIIIGAAF) and 79–99 (IQTVIDFIIVAFAIFMGVKAI).

This sequence belongs to the MscL family. As to quaternary structure, homopentamer.

Its subcellular location is the cell inner membrane. Its function is as follows. Channel that opens in response to stretch forces in the membrane lipid bilayer. May participate in the regulation of osmotic pressure changes within the cell. The polypeptide is Large-conductance mechanosensitive channel (Pseudomonas syringae pv. syringae (strain B728a)).